Here is a 512-residue protein sequence, read N- to C-terminus: Cytochrome P450 monooxygenase hkm5 (512 aa).

The helical transmembrane segment at 18–38 (LIQLVRALLWVLVITIGGAIV) threads the bilayer. 5 N-linked (GlcNAc...) asparagine glycosylation sites follow: Asn184, Asn263, Asn275, Asn374, and Asn419. Cys456 lines the heme pocket.

Belongs to the cytochrome P450 family. The cofactor is heme.

It localises to the membrane. It carries out the reaction hancockiamide A + reduced [NADPH--hemoprotein reductase] + O2 = hancockiamide G + oxidized [NADPH--hemoprotein reductase] + 2 H2O + H(+). It catalyses the reaction hancockiamide B + reduced [NADPH--hemoprotein reductase] + O2 = hancockiamide C + oxidized [NADPH--hemoprotein reductase] + 2 H2O + H(+). The enzyme catalyses hancockiamide D + reduced [NADPH--hemoprotein reductase] + O2 = hancockiamide H + oxidized [NADPH--hemoprotein reductase] + 2 H2O + H(+). The protein operates within secondary metabolite biosynthesis. Cytochrome P450 monooxygenase; part of the gene cluster that mediates the biosynthesis of hancockiamides, an unusual new family of N-cinnamoylated piperazines. The NRPS hkm10 and the NmrA-like reductase hkm9 are proposed to convert two molecules of L-Phe to the intermediary piperazine called xenocockiamide A. Xenocockiamide A is then converted to hancockiamide D via a series of hydroxylations and O-methylations. The tyrosinase hkm6 may catalyze an aromatic hydroxylation, then the 2-oxoglutarate-dependent Fe(II) dioxygenase hkm4 and the FAD-dependent phenol hydroxylase hkm7 may catalyze consecutive hydroxylations to install 2 more hydroxy groups, and the methyltransferase hkm8 probably catalyzes two methylations using 2 molecules of S-adenosyl-L-methionine (SAM). The NRPS hkm11 activates and transfers trans-cinnamate supplied by the PAL hkm12 to hancockiamide D and produces hancockiamide A. NRPS Hkm11 has the flexibility to tolerate the bulky hancockiamide G as a substrate and the absence of the acetyl-transferase hkm3 opens up the opportunity for hkm11 to introduce a second N-cinnamoyl moiety. The cytochrome P450 monooxygenase hkm5 catalyzes the methylenedioxy bridge formation, converting hancockiamide A into hancockiamide G. Hkm5 can also convert hancockiamide B into hancockiamide C, and hancockiamide D into hancockiamide H. The N-acetyltransferase hkm3 finally transfers an acetyl group to 1-N of piperazine, converting hancockiamide A into hancockiamide B and hancockiamide G into hancockiamide C. In Aspergillus hancockii, this protein is Cytochrome P450 monooxygenase hkm5.